The primary structure comprises 156 residues: RNA polymerase sigma factor SigS (156 aa).

Residues 29-44 (EYYQLLLIKMWQLSQI) carry the Polymerase core binding motif. The segment at residues 126 to 145 (QFEIAEIMSLSLSTIKLIKM) is a DNA-binding region (H-T-H motif).

Belongs to the sigma-70 factor family.

Its function is as follows. Sigma factors are initiation factors that promote the attachment of RNA polymerase to specific initiation sites and are then released. Sigma-S contributes to the protection against external stress, thus playing a role in cellular fitness and survival. The polypeptide is RNA polymerase sigma factor SigS (sigS) (Staphylococcus aureus (strain NCTC 8325 / PS 47)).